Reading from the N-terminus, the 100-residue chain is Urease subunit gamma (100 aa).

The protein belongs to the urease gamma subunit family. Heterotrimer of UreA (gamma), UreB (beta) and UreC (alpha) subunits. Three heterotrimers associate to form the active enzyme.

The protein resides in the cytoplasm. It carries out the reaction urea + 2 H2O + H(+) = hydrogencarbonate + 2 NH4(+). It participates in nitrogen metabolism; urea degradation; CO(2) and NH(3) from urea (urease route): step 1/1. This chain is Urease subunit gamma, found in Escherichia coli.